Here is a 539-residue protein sequence, read N- to C-terminus: Transcription factor LG2 (539 aa).

Residues 115 to 125 show a composition bias toward polar residues; the sequence is MRQQQQLHSGN. Disordered regions lie at residues 115–140 and 181–246; these read MRQQQQLHSGNSQSVGSTTDSSSAQN and KPGL…KSRL. 2 stretches are compositionally biased toward low complexity: residues 126-137 and 192-205; these read SQSVGSTTDSSS and QQQHQLQHHQQQQL. The segment covering 219–242 has biased composition (basic and acidic residues); sequence TRKDGKSVDAKTERRLAQNREAAR. Residues 227 to 271 form the bZIP domain; the sequence is DAKTERRLAQNREAARKSRLRKKAYVQNLETSRVRLQQIEQELQR. A basic motif region spans residues 229-249; it reads KTERRLAQNREAARKSRLRKK. The interval 255-269 is leucine-zipper; sequence LETSRVRLQQIEQEL. The DOG1 domain maps to 292 to 506; the sequence is AAMFDMEYAR…RALSNLWSSR (215 aa). The tract at residues 513 to 539 is disordered; that stretch reads GTESVSPTGTELQPMHNQPQQNQYSGF.

Belongs to the bZIP family. As to quaternary structure, interacts with NPR1/NH1 and NPR3/NH3.

It localises to the nucleus. Functionally, transcriptional regulator involved in defense response. Acts as a transcriptional activator in vitro. This is Transcription factor LG2 from Oryza sativa subsp. japonica (Rice).